The primary structure comprises 465 residues: UPF0422 protein CBU_0937 (465 aa).

The signal sequence occupies residues 1 to 23 (MTSKLVISALGLCVSGALSTTLA). Positions 28 to 60 (TTNQQITKRIDYLQAQINELRTQQKKERQKKKA) form a coiled coil.

It belongs to the UPF0422 family.

In Coxiella burnetii (strain RSA 493 / Nine Mile phase I), this protein is UPF0422 protein CBU_0937.